The sequence spans 336 residues: Phosphate acyltransferase (336 aa).

It belongs to the PlsX family. Homodimer. Probably interacts with PlsY.

It is found in the cytoplasm. The enzyme catalyses a fatty acyl-[ACP] + phosphate = an acyl phosphate + holo-[ACP]. It participates in lipid metabolism; phospholipid metabolism. In terms of biological role, catalyzes the reversible formation of acyl-phosphate (acyl-PO(4)) from acyl-[acyl-carrier-protein] (acyl-ACP). This enzyme utilizes acyl-ACP as fatty acyl donor, but not acyl-CoA. The chain is Phosphate acyltransferase from Dictyoglomus thermophilum (strain ATCC 35947 / DSM 3960 / H-6-12).